The following is a 500-amino-acid chain: MSRRFPIQVAQSEIPPIAWGLWRMVYRLWLHPLSGYPGPRLAAVSNLPYFAWTCTGNLHLRLQELHKVYGDVIRIRPNALTYRTPEAWTDIYGHRKPGTLPFSKDPEFFMPAQAGSSHMINANEKDHTRQKRLLNHAFSERSLRQQEHLIMGYIDLFIQRLRGQARMGAETVNMEEWLNFLTFDIIGDLAFGEPFGCLQNSEYHPWVATIFKSIKTGAILRALNIYPILLGFIRRFLPKSLVQKRIAHYQMSKDRVTRRLQTETSRPDFISYILKYNDDRGMSTPEIEMNAALLIQAGSETTATVLAACLYFLQKNAACHRRLVQDIRSAFTQETDINFLSAAQLPYMNGVIEESLRLFPPAPGIGPRVVPKGGARICGRYVPGGVSVSVGHYSTFRSARNFTRPNEFLPQRWLDRDAESEFASDQTMALQPFSYGPRACIGRNLAYAEMRTILAKILWHFDVQLDERSADWANSKSYIVWEKGPLWLKLHPRNVPQETD.

Cys-440 contacts heme.

It belongs to the cytochrome P450 family. Heme serves as cofactor.

The protein operates within secondary metabolite biosynthesis; terpenoid biosynthesis. In terms of biological role, cytochrome P450 monooxygenase; part of the gene cluster that mediates the biosynthesis of astellolides, drimane-type sesquiterpene esters that show antimicrobial, anti-inflammatory, and anti-tumor activities. The first step in astellolide biosynthesis is performed by the sesquiterpene cyclase astC that catalyzes the formation of drimanyl pyrophosphate from farnesyl pyrophosphate. Drimanyl pyrophosphate is then dephosphorylated by the sesquiterpene phosphatase astI to produce drimanyl monophosphate which is further dephosphorylated to drim-8-ene-11-ol by atsK. Drim-8-ene-11-ol is converted to confertifolin, probably by the cytochrome P450 monooxygenase astD and/or the dehydrogenase astE. The cytochrome P450 monooxygenases astB, astF and astJ then hydroxylate confertifolin at C6, C14, or C15 to form trihydroxy confertifolin. The nonribosomal peptide synthetase astA catalyzes ester bond formation between trihydroxy contifolin and benzoic acid (BA) or 4-hydroxy benzoic acid (4HBA), leading to the formation of dideacetyl astellolides A and B, respectively. Finally, the O-acetyltransferase astG converts dideacetyl astellolides A and B into deacetyl astellolides A and B. The sequence is that of Cytochrome P450 monooxygenase astJ from Aspergillus oryzae (strain ATCC 42149 / RIB 40) (Yellow koji mold).